A 190-amino-acid chain; its full sequence is uncharacterized protein (190 aa).

The Cytoplasmic segment spans residues 1–16; that stretch reads MAILPEFISQTPPVTR. A helical transmembrane segment spans residues 17 to 37; the sequence is YIVLGTLFTTLAVNFGYVSDL. At 38-55 the chain is on the lumenal side; that stretch reads KIFFNWKLFLAKGEYWRA. A helical transmembrane segment spans residues 56-76; it reads ITTFLYVGPFGLELILYLSFL. Residues 77–98 lie on the Cytoplasmic side of the membrane; it reads LRFMSMLERSSPPPQTQSFLKT. Residues 99 to 119 form a helical membrane-spanning segment; sequence VLIVWFSLLVTSYFSYMPFAA. Residues 120–138 lie on the Lumenal side of the membrane; sequence SYFSFTMLYIWSWKHPLYR. The helical transmembrane segment at 139 to 159 threads the bilayer; that stretch reads ISILGLFDVKAPYVPWVMVLL. The Cytoplasmic segment spans residues 160–163; the sequence is RWLR. Residues 164-184 form a helical membrane-spanning segment; that stretch reads TGIFPLLDLISALIGHVYFFV. The Lumenal portion of the chain corresponds to 185 to 190; it reads TDFSTV.

The protein belongs to the derlin family.

The protein localises to the endoplasmic reticulum membrane. This is an uncharacterized protein from Schizosaccharomyces pombe (strain 972 / ATCC 24843) (Fission yeast).